Consider the following 371-residue polypeptide: Cytochrome b (371 aa).

4 helical membrane-spanning segments follow: residues 25–45 (FGSM…FLAV), 69–90 (WMMQ…YIHI), 105–125 (WMSG…GYVL), and 170–190 (FFAL…LHII). Positions 75 and 89 each coordinate heme b. Residues His174 and His188 each contribute to the heme b site. His193 lines the a ubiquinone pocket. The next 4 membrane-spanning stretches (helical) occupy residues 218 to 238 (HKDL…SSFF), 280 to 300 (LGGA…PFTH), 312 to 332 (LSQL…WAAT), and 339 to 358 (FIVI…LSTP).

Belongs to the cytochrome b family. The cytochrome bc1 complex contains 3 respiratory subunits (MT-CYB, CYC1 and UQCRFS1), 2 core proteins (UQCRC1 and UQCRC2) and probably 6 low-molecular weight proteins. Heme b is required as a cofactor.

It is found in the mitochondrion inner membrane. Its function is as follows. Component of the ubiquinol-cytochrome c reductase complex (complex III or cytochrome b-c1 complex) that is part of the mitochondrial respiratory chain. The b-c1 complex mediates electron transfer from ubiquinol to cytochrome c. Contributes to the generation of a proton gradient across the mitochondrial membrane that is then used for ATP synthesis. This chain is Cytochrome b (MT-CYB), found in Aspidites melanocephalus (Black-headed python).